The primary structure comprises 227 residues: Ribonuclease 3 (227 aa).

An RNase III domain is found at Thr-3 to Gly-130. Glu-43 lines the Mg(2+) pocket. Residue Asp-47 is part of the active site. Mg(2+) contacts are provided by Asn-116 and Glu-119. Glu-119 is a catalytic residue. Residues Asp-155–Tyr-224 form the DRBM domain.

The protein belongs to the ribonuclease III family. Homodimer. Requires Mg(2+) as cofactor.

It localises to the cytoplasm. The catalysed reaction is Endonucleolytic cleavage to 5'-phosphomonoester.. Digests double-stranded RNA. Involved in the processing of primary rRNA transcript to yield the immediate precursors to the large and small rRNAs (23S and 16S). Processes some mRNAs, and tRNAs when they are encoded in the rRNA operon. Processes pre-crRNA and tracrRNA of type II CRISPR loci if present in the organism. This is Ribonuclease 3 from Ehrlichia ruminantium (strain Welgevonden).